The following is a 1071-amino-acid chain: Intracellular phospholipase A2 (1071 aa).

Positions 1–22 are disordered; the sequence is MTTTNKDGPFRQQYLPGVHKEP. ANK repeat units lie at residues 411–440, 479–508, 510–539, 544–570, 578–610, 614–651, and 652–681; these read ENCY…TLFC, DGQS…KFTR, DRNE…EIAN, LGNS…ELGL, AGET…NMNA, HGNT…KINL, and RGES…TRCP. The PNPLA domain maps to 748–921; sequence ISMDGGGIRG…ISNNPALDLM (174 aa). Residues 752–757 carry the GXGXXG motif; that stretch reads GGGIRG. The GXSXG signature appears at 784–788; the sequence is GTSTG. The active-site Nucleophile is the Ser786. Asp908 (proton acceptor) is an active-site residue. The DGA/G signature appears at 908–910; it reads DGG.

This sequence belongs to the patatin family.

The catalysed reaction is a 1,2-diacyl-sn-glycero-3-phosphocholine + H2O = a 1-acyl-sn-glycero-3-phosphocholine + a fatty acid + H(+). Functionally, phospholipase that plays a critical role during oogenesis, ovulation, and/or embryogenesis. The chain is Intracellular phospholipase A2 from Caenorhabditis elegans.